Consider the following 500-residue polypeptide: Alpha-L-arabinofuranosidase (500 aa).

The N-terminal stretch at 1–21 (MLSNARIIAAGCIAAGSLVAA) is a signal peptide. A glycan (N-linked (GlcNAc...) asparagine) is linked at Asn-467.

Belongs to the glycosyl hydrolase 54 family.

It carries out the reaction Hydrolysis of terminal non-reducing alpha-L-arabinofuranoside residues in alpha-L-arabinosides.. It participates in glycan metabolism; L-arabinan degradation. The chain is Alpha-L-arabinofuranosidase (abf1) from Hypocrea jecorina (Trichoderma reesei).